Consider the following 347-residue polypeptide: D-alanine--D-alanine ligase (347 aa).

Residues 134 to 332 (KLYAKDLGVK…LAQSLPKTPK (199 aa)) form the ATP-grasp domain. ATP is bound at residue 161–216 (LIGFNFPFIIKPSNAGSSLGVSVVKEEKELIYALDGAFEYSKEILIEPFIQGVKEY). Mg(2+)-binding residues include aspartate 288, glutamate 300, and asparagine 302.

This sequence belongs to the D-alanine--D-alanine ligase family. The cofactor is Mg(2+). It depends on Mn(2+) as a cofactor.

The protein localises to the cytoplasm. It catalyses the reaction 2 D-alanine + ATP = D-alanyl-D-alanine + ADP + phosphate + H(+). It participates in cell wall biogenesis; peptidoglycan biosynthesis. Cell wall formation. The polypeptide is D-alanine--D-alanine ligase (Helicobacter pylori (strain Shi470)).